The following is a 388-amino-acid chain: MAFPRTLAILAAAAALVVACSHGGTPTGSSTTSGASPATPVAVPVPRSCAEPAGIPALLSPRDKLAQLLVVGVRDAADAQAVVTNYHVGGILIGSDTDLTIFDGALAEIVAGGGPLPLAVSVDEEGGRVSRLRSLIGGTGPSARELAQTRTVQQVRDLARDRGRQMRKLGITIDFAPVVDVTDAPDDTVIGDRSFGSDPATVTAYAGAYAQGLRDAGVLPVLKHFPGHGRGSGDSHNGGVTTPPLDDLVGDDLVPYRTLVTQAPVGVMVGHLQVPGLTGSEPASLSKAAVNLLRTGTGYGAPPFDGPVFSDDLSGMAAISDRFGVSEAVLRTLQAGADIALWVTTKEVPAVLDRLEQALRAGELPMSAVDRSVVRVATMKGPNPGCGR.

Residues 1-19 (MAFPRTLAILAAAAALVVA) form the signal peptide. Residue Cys20 is the site of N-palmitoyl cysteine attachment. The S-diacylglycerol cysteine moiety is linked to residue Cys20. Residues Asp123, Arg131, Arg193, and 223–224 (KH) contribute to the substrate site. The Proton donor/acceptor role is filled by His236. Asp311 serves as the catalytic Nucleophile.

The protein belongs to the glycosyl hydrolase 3 family.

The protein localises to the cell inner membrane. It catalyses the reaction Hydrolysis of terminal non-reducing N-acetyl-D-hexosamine residues in N-acetyl-beta-D-hexosaminides.. It functions in the pathway cell wall biogenesis; peptidoglycan recycling. Plays a role in peptidoglycan recycling by cleaving the terminal beta-1,4-linked N-acetylglucosamine (GlcNAc) from peptidoglycan fragments. Acts as a regulator for GlcNAc-MurNAc levels by cleaving disaccharides and allowing the breakdown of MurNAc. This chain is Beta-hexosaminidase LpqI, found in Mycobacterium tuberculosis (strain ATCC 25618 / H37Rv).